A 416-amino-acid chain; its full sequence is Serine hydroxymethyltransferase (416 aa).

(6S)-5,6,7,8-tetrahydrofolate contacts are provided by residues leucine 118 and 122-124 (GHL). Position 226 is an N6-(pyridoxal phosphate)lysine (lysine 226). Residues glutamate 242 and 350–352 (SPF) each bind (6S)-5,6,7,8-tetrahydrofolate.

It belongs to the SHMT family. Homodimer. The cofactor is pyridoxal 5'-phosphate.

Its subcellular location is the cytoplasm. The enzyme catalyses (6R)-5,10-methylene-5,6,7,8-tetrahydrofolate + glycine + H2O = (6S)-5,6,7,8-tetrahydrofolate + L-serine. It functions in the pathway one-carbon metabolism; tetrahydrofolate interconversion. It participates in amino-acid biosynthesis; glycine biosynthesis; glycine from L-serine: step 1/1. Functionally, catalyzes the reversible interconversion of serine and glycine with tetrahydrofolate (THF) serving as the one-carbon carrier. This reaction serves as the major source of one-carbon groups required for the biosynthesis of purines, thymidylate, methionine, and other important biomolecules. Also exhibits THF-independent aldolase activity toward beta-hydroxyamino acids, producing glycine and aldehydes, via a retro-aldol mechanism. The protein is Serine hydroxymethyltransferase of Helicobacter pylori (strain Shi470).